We begin with the raw amino-acid sequence, 417 residues long: Acetyltransferase cdmC (417 aa).

Asn64 carries an N-linked (GlcNAc...) asparagine glycan. Helical transmembrane passes span 308–328, 357–377, and 389–409; these read IPDG…GYLV, GIFW…YPLL, and LVES…AFIL.

This sequence belongs to the wax synthase family.

It is found in the membrane. The catalysed reaction is chrodrimanin A + acetyl-CoA = chrodrimanin B + CoA. The protein operates within secondary metabolite biosynthesis; terpenoid biosynthesis. In terms of biological role, acetyltransferase; part of the gene cluster that mediates the biosynthesis of chrodrimanin B, a meroterpenoid that acts as a potent blocker of insect GABA-gated chloride channels. The first step of the pathway is the biosynthesis of 6-hydroxymellein by the polyketide synthase cdmE. The prenyltransferase cdmH acts as a 6-hydroxymellein 5-farnesyltransferase and produces the hydrophobic metabolite verruculide C. The FAD-dependent monooxygenase cdmI further converts verruculide C into verruculide B. The terpene cyclase cdmG then produced the pentacyclic molecule 3-hydroxypentacecilide A, the backbone structure of chrodrimanin B, via folding the farnesyl moiety of the substrate into the chair-boat conformation. The short-chain dehydrogenase/reductase cdmF functions as the 3-OH dehydrogenase that oxidizes the C-3 hydroxyl group of 3-hydroxypentacecilide A and produces chrodrimanin C, the dehydrogenated product of 3-hydroxypentacecilide A. The cytochrome P450 monooxygenase cdmJ then accepts both 3-hydroxypentacecilide A and chrodrimanin C and functions as a C-7-beta-hydroxylase to produce respectively chrodrimanin H and chrodrimanin F. The dioxygenase cdmA accepts chrodrimanin H to afford chrodrimanin E, which is further transformed to chrodrimanin A by the dioxygenase cdmD. CdmA can also accept chrodrimanin C as substrate to convert it into verruculide A, which is further converted into chrodrimanin T by cdmD. The last step of the biosynthesis is proposed to be performed by the acetyltransferase cdmC which acetylates chrodrimanin A to yield chrodrimanin B. The pathway may also lead to the production of additional shunt products, including chrodrimanins T and U. This Talaromyces verruculosus (Penicillium verruculosum) protein is Acetyltransferase cdmC.